The chain runs to 519 residues: Lysine histidine transporter-like 8 (519 aa).

Positions 1-44 are disordered; that stretch reads MDERPETELISIPATPRVSTPEILTPSGQRSPRPATKPSSATWT. Residues 1 to 114 are Cytoplasmic-facing; the sequence is MDERPETELI…NLNAGVGFQA (114 aa). The next 2 membrane-spanning stretches (helical) occupy residues 115-135 and 136-156; these read LVLPVAFAFLGWSWGILSLTI and AYCWQLYTLWILVQLHEAVPG. The Cytoplasmic portion of the chain corresponds to 157–176; sequence KRYNRYVELAQAAFGERLGV. A helical membrane pass occupies residues 177–197; sequence WLALFPTVYLSAGTATALILI. Residues 198-217 are Extracellular-facing; it reads GGETMKLFFQIVCGPLCTSN. Residues 218–238 traverse the membrane as a helical segment; sequence PLTTVEWYLVFTSLCIVLSQL. At 239-243 the chain is on the cytoplasmic side; sequence PNLNS. The helical transmembrane segment at 244–264 threads the bilayer; it reads IAGLSLIGAVTAITYSTMVWV. The Extracellular portion of the chain corresponds to 265-282; that stretch reads LSVSQPRPATISYEPLSM. The chain crosses the membrane as a helical span at residues 283–303; the sequence is PSTSGSLFAVLNALGIIAFAF. Topologically, residues 304–333 are cytoplasmic; sequence RGHNLVLEIQSTMPSTFKHPAHVPMWRGAK. The chain crosses the membrane as a helical span at residues 334-354; it reads ISYFLIALCIFPISIGGFWAY. Over 355-377 the chain is Extracellular; the sequence is GNLMPSGGMLAALYAFHIHDIPR. A helical membrane pass occupies residues 378-398; it reads GLLATAFLLVVFSCLSSFQIY. Topologically, residues 399–427 are cytoplasmic; the sequence is SMPAFDSFEAGYTSRTNKPCSIWVRSGFR. The helical transmembrane segment at 428–448 threads the bilayer; it reads VFFGFVSFFIGVALPFLSSLA. Position 449 (Gly449) is a topological domain, extracellular. The helical transmembrane segment at 450-470 threads the bilayer; it reads LLGGLTLPVTFAYPCFMWVLI. Over 471-485 the chain is Cytoplasmic; sequence KKPAKYSFNWYFHWG. Residues 486 to 506 traverse the membrane as a helical segment; sequence LGWLGVAFSLAFSIGGIWSMV. Topologically, residues 507–519 are extracellular; sequence TNGLKLKFFKPPN.

The protein belongs to the amino acid/polyamine transporter 2 family. Amino acid/auxin permease (AAAP) (TC 2.A.18.2) subfamily.

Its subcellular location is the cell membrane. In terms of biological role, amino acid transporter. In Arabidopsis thaliana (Mouse-ear cress), this protein is Lysine histidine transporter-like 8 (AATL1).